The sequence spans 207 residues: Urease accessory protein UreG (207 aa).

14–21 (GPVGSGKT) lines the GTP pocket.

The protein belongs to the SIMIBI class G3E GTPase family. UreG subfamily. In terms of assembly, homodimer. UreD, UreF and UreG form a complex that acts as a GTP-hydrolysis-dependent molecular chaperone, activating the urease apoprotein by helping to assemble the nickel containing metallocenter of UreC. The UreE protein probably delivers the nickel.

The protein localises to the cytoplasm. Facilitates the functional incorporation of the urease nickel metallocenter. This process requires GTP hydrolysis, probably effectuated by UreG. In Tolumonas auensis (strain DSM 9187 / NBRC 110442 / TA 4), this protein is Urease accessory protein UreG.